We begin with the raw amino-acid sequence, 99 residues long: MRSLTLAALLLCSLLLVFHTSAAEELQAQEGHLMIPGDTDTALETVDDERLFECTFECDIKKEGKPCKPKGCKCDDKDNKDHKKCSGGWRCKLKLCLKI.

The N-terminal stretch at 1 to 23 (MRSLTLAALLLCSLLLVFHTSAA) is a signal peptide. The propeptide occupies 24–50 (EELQAQEGHLMIPGDTDTALETVDDER). 4 disulfide bridges follow: cysteine 54/cysteine 67, cysteine 58/cysteine 91, cysteine 72/cysteine 74, and cysteine 85/cysteine 96.

This sequence belongs to the neurotoxin 12 (Hwtx-2) family. 04 (lasiotoxin) subfamily. As to expression, expressed by the venom gland.

It is found in the secreted. Toxin that causes irreversible contractile paralysis into adult Aedes aegypti resulting in 100% mortality after 24 hours. The protein is U1-theraphotoxin-Lsp1b of Lasiodora sp. (strain IBSP 8539) (Brazilian salmon pink birdeater).